A 314-amino-acid chain; its full sequence is tRNA pseudouridine synthase B (314 aa).

A substrate-binding site is contributed by His43. The active-site Nucleophile is the Asp48. Substrate contacts are provided by Tyr76, Tyr179, and Leu200.

Belongs to the pseudouridine synthase TruB family. Type 1 subfamily.

The catalysed reaction is uridine(55) in tRNA = pseudouridine(55) in tRNA. Its function is as follows. Responsible for synthesis of pseudouridine from uracil-55 in the psi GC loop of transfer RNAs. The sequence is that of tRNA pseudouridine synthase B from Serratia proteamaculans (strain 568).